The chain runs to 502 residues: T-complex protein 11-like X-linked protein 2 (502 aa).

A disordered region spans residues 1 to 36; sequence MPKTEETVLQNDPSVAENGAPEPKTPGQSQKSKSFC.

This sequence belongs to the TCP11 family.

This chain is T-complex protein 11-like X-linked protein 2, found in Homo sapiens (Human).